A 1344-amino-acid chain; its full sequence is Period circadian protein homolog 2 (1344 aa).

2 disordered regions span residues 1–21 and 42–112; these read MDCI…PEQQ and EYSG…NGKD. The segment covering 10-21 has biased composition (polar residues); the sequence is YSSTEEQNPEQQ. Positions 78 to 89 are enriched in low complexity; sequence SSGSSGNDFSGN. A compositionally biased stretch (basic and acidic residues) spans 99-111; the sequence is HDSHGHESDENGK. Residues 161–170 carry the Nuclear export signal 1 motif; it reads LLKTLQELKA. The PAS 1 domain occupies 231-298; sequence ITSEYIMKNA…FYTSTTPYRL (68 aa). The LXXLL motif lies at 358-362; sequence LCCVL. The PAS 2 domain occupies 371-437; it reads YEAPRIPPDK…MLAIHKKILQ (67 aa). The 44-residue stretch at 445-488 folds into the PAC domain; it reads YSPIRFCTRNGDYITMDTSWSSFINPWSRKVSFIIGRHKVRTGP. Residues 512–521 carry the Nuclear export signal 2 motif; the sequence is ITEQIYRLLL. Disordered stretches follow at residues 531–609, 661–686, 823–894, 1038–1065, and 1107–1126; these read GYGS…QVKD, AKRK…NAIQ, LQDK…WSPS, TETR…PLFQ, and TTDA…MDAQ. Positions 549 to 559 are enriched in low complexity; it reads SSSDSTGNNND. 2 stretches are compositionally biased toward basic and acidic residues: residues 560 to 573 and 583 to 597; these read DTQK…DARK and TENK…EPSA. Residues 667–684 show a composition bias toward polar residues; it reads PSSSVNSSVHEQKASVNA. Residues 825-836 are compositionally biased toward basic and acidic residues; that stretch reads DKPKGRPGERGG. A Nuclear localization signal motif is present at residues 851-865; the sequence is KKSGKNRKSKRIKPQ. Over residues 852-862 the composition is skewed to basic residues; the sequence is KSGKNRKSKRI. 3 stretches are compositionally biased toward polar residues: residues 865–875, 885–894, and 1045–1059; these read QESSDSTTSGT, GLNTTAWSPS, and SRSC…QDQA. The short motif at 1138–1142 is the LXXLL element; the sequence is LDILL. The span at 1149–1172 shows a compositional bias: low complexity; sequence GTGSASSGSGVSAAAESLGSGSNG. The interval 1149–1197 is disordered; the sequence is GTGSASSGSGVSAAAESLGSGSNGCDMSGSRTGSSETSHTSKYFGSIDS. A compositionally biased stretch (polar residues) spans 1177–1197; the sequence is GSRTGSSETSHTSKYFGSIDS. The segment at 1244–1344 is CRY binding domain; the sequence is SRDLETVLKE…PLSQVNEEQT (101 aa).

In terms of assembly, component of the circadian clock oscillator which includes the CRY proteins, CLOCK or NPAS2, BMAL1 or BMAL2, CSNK1E, and the PER proteins. Interacts directly with PER3, and through a C-terminal domain, with CRY1 and CRY2.

It is found in the nucleus. The protein resides in the cytoplasm. Transcriptional repressor which forms a core component of the circadian clock. The circadian clock, an internal time-keeping system, regulates various physiological processes through the generation of approximately 24 hour circadian rhythms in gene expression, which are translated into rhythms in metabolism and behavior. It is derived from the Latin roots 'circa' (about) and 'diem' (day) and acts as an important regulator of a wide array of physiological functions including metabolism, sleep, body temperature, blood pressure, endocrine, immune, cardiovascular, and renal function. Consists of two major components: the central clock, residing in the suprachiasmatic nucleus (SCN) of the brain, and the peripheral clocks that are present in nearly every tissue and organ system. Both the central and peripheral clocks can be reset by environmental cues, also known as Zeitgebers (German for 'timegivers'). The predominant Zeitgeber for the central clock is light, which is sensed by retina and signals directly to the SCN. The central clock entrains the peripheral clocks through neuronal and hormonal signals, body temperature and feeding-related cues, aligning all clocks with the external light/dark cycle. Circadian rhythms allow an organism to achieve temporal homeostasis with its environment at the molecular level by regulating gene expression to create a peak of protein expression once every 24 hours to control when a particular physiological process is most active with respect to the solar day. Transcription and translation of core clock components (CLOCK, NPAS2, BMAL1, BMAL2, PER1, PER2, PER3, CRY1 and CRY2) plays a critical role in rhythm generation, whereas delays imposed by post-translational modifications (PTMs) are important for determining the period (tau) of the rhythms (tau refers to the period of a rhythm and is the length, in time, of one complete cycle). A diurnal rhythm is synchronized with the day/night cycle, while the ultradian and infradian rhythms have a period shorter and longer than 24 hours, respectively. Disruptions in the circadian rhythms contribute to the pathology of cardiovascular diseases, cancer, metabolic syndrome and aging. A transcription/translation feedback loop (TTFL) forms the core of the molecular circadian clock mechanism. Transcription factors, CLOCK or NPAS2 and BMAL1 or BMAL2, form the positive limb of the feedback loop, act in the form of a heterodimer and activate the transcription of core clock genes and clock-controlled genes (involved in key metabolic processes), harboring E-box elements (5'-CACGTG-3') within their promoters. The core clock genes: PER1/2/3 and CRY1/2 which are transcriptional repressors form the negative limb of the feedback loop and interact with the CLOCK|NPAS2-BMAL1|BMAL2 heterodimer inhibiting its activity and thereby negatively regulating their own expression. This heterodimer also activates nuclear receptors NR1D1/2 and RORA/B/G, which form a second feedback loop and which activate and repress BMAL1 transcription, respectively. PER1 and PER2 proteins transport CRY1 and CRY2 into the nucleus with appropriate circadian timing, but also contribute directly to repression of clock-controlled target genes through interaction with several classes of RNA-binding proteins, helicases and others transcriptional repressors. PER appears to regulate circadian control of transcription by at least three different modes. First, interacts directly with the CLOCK-BMAL1 at the tail end of the nascent transcript peak to recruit complexes containing the SIN3-HDAC that remodel chromatin to repress transcription. Second, brings H3K9 methyltransferases such as SUV39H1 and SUV39H2 to the E-box elements of the circadian target genes, like PER2 itself or PER1. The recruitment of each repressive modifier to the DNA seems to be very precisely temporally orchestrated by the large PER complex, the deacetylases acting before than the methyltransferases. Additionally, large PER complexes are also recruited to the target genes 3' termination site through interactions with RNA-binding proteins and helicases that may play a role in transcription termination to regulate transcription independently of CLOCK-BMAL1 interactions. This is Period circadian protein homolog 2 (PER2) from Gallus gallus (Chicken).